Consider the following 484-residue polypeptide: Probable UDP-N-acetylglucosamine pyrophosphorylase (484 aa).

Residues 107–110 carry the Substrate binding motif; that stretch reads LAGG. Residues 107-110, lysine 121, glutamine 200, and glycine 226 each bind UTP; that span reads LAGG. A substrate-binding site is contributed by asparagine 227. Residue aspartate 255 coordinates UTP. The short motif at 304 to 305 is the Substrate binding element; sequence EY. Position 377 (lysine 377) interacts with UTP. Substrate is bound at residue lysine 407.

It belongs to the UDPGP type 1 family.

It localises to the cytoplasm. It carries out the reaction N-acetyl-alpha-D-glucosamine 1-phosphate + UTP + H(+) = UDP-N-acetyl-alpha-D-glucosamine + diphosphate. It participates in nucleotide-sugar biosynthesis; UDP-N-acetyl-alpha-D-glucosamine biosynthesis; UDP-N-acetyl-alpha-D-glucosamine from N-acetyl-alpha-D-glucosamine 1-phosphate: step 1/1. This is Probable UDP-N-acetylglucosamine pyrophosphorylase from Caenorhabditis elegans.